We begin with the raw amino-acid sequence, 245 residues long: Nodulation protein G (245 aa).

Residue 11–35 (VTGASGAIGGAIARVLHAQGAIVGL) coordinates NAD(+). Substrate is bound at residue serine 139. The Proton acceptor role is filled by tyrosine 152.

This sequence belongs to the short-chain dehydrogenases/reductases (SDR) family.

Its function is as follows. Proposed to modify Nod factor fatty acyl chain. The sequence is that of Nodulation protein G (nodG) from Rhizobium meliloti (strain 1021) (Ensifer meliloti).